The sequence spans 233 residues: Apoptosis regulator Bcl-2 (233 aa).

The short motif at D10 to W30 is the BH4 element. The disordered stretch occupies residues A32 to G86. A BH3 motif is present at residues V87–R101. Residues E130–G149 carry the BH1 motif. Residues N181–Y196 carry the BH2 motif. A helical membrane pass occupies residues W208–A228.

This sequence belongs to the Bcl-2 family. As to quaternary structure, forms homodimers, and heterodimers with BAX, BAD, BAK and Bcl-X(L). Heterodimerization with BAX requires intact BH1 and BH2 motifs, and is necessary for anti-apoptotic activity. Also interacts with APAF1 and RAF-1. In adult chicken expressed, in thymus, spleen, kidney, heart, ovary and brain, with the highest levels in the thymus. In the embryo, highly levels expressed in all tissues with high levels in the bursa of Fabricius.

It localises to the mitochondrion outer membrane. Its subcellular location is the nucleus membrane. It is found in the endoplasmic reticulum membrane. The protein localises to the cytoplasm. In terms of biological role, suppresses apoptosis in a variety of cell systems including factor-dependent lymphohematopoietic and neural cells. Regulates cell death by controlling the mitochondrial membrane permeability. Appears to function in a feedback loop system with caspases. Inhibits caspase activity either by preventing the release of cytochrome c from the mitochondria and/or by binding to the apoptosis-activating factor (APAF-1). This Gallus gallus (Chicken) protein is Apoptosis regulator Bcl-2 (BCL2).